Consider the following 83-residue polypeptide: Short neurotoxin 1 (83 aa).

Residues 1–21 (MKTLLLTLVVVTIVCLDLGYT) form the signal peptide. Disulfide bonds link Cys24-Cys45, Cys38-Cys62, Cys64-Cys75, and Cys76-Cys81.

This sequence belongs to the three-finger toxin family. Short-chain subfamily. Type I alpha-neurotoxin sub-subfamily. Expressed by the venom gland.

The protein resides in the secreted. Binds to muscle nicotinic acetylcholine receptor (nAChR) and inhibit acetylcholine from binding to the receptor, thereby impairing neuromuscular transmission. The protein is Short neurotoxin 1 of Oxyuranus scutellatus scutellatus (Australian taipan).